Consider the following 247-residue polypeptide: Coproheme decarboxylase (247 aa).

Fe-coproporphyrin III contacts are provided by residues arginine 129, 143-147 (YPMDK), histidine 170, glutamine 183, and serine 221. Residue tyrosine 143 is part of the active site.

This sequence belongs to the ChdC family. Type 1 subfamily. The cofactor is Fe-coproporphyrin III.

It carries out the reaction Fe-coproporphyrin III + 2 H2O2 + 2 H(+) = heme b + 2 CO2 + 4 H2O. It catalyses the reaction Fe-coproporphyrin III + H2O2 + H(+) = harderoheme III + CO2 + 2 H2O. The enzyme catalyses harderoheme III + H2O2 + H(+) = heme b + CO2 + 2 H2O. The protein operates within porphyrin-containing compound metabolism; protoheme biosynthesis. In terms of biological role, involved in coproporphyrin-dependent heme b biosynthesis. Catalyzes the decarboxylation of Fe-coproporphyrin III (coproheme) to heme b (protoheme IX), the last step of the pathway. The reaction occurs in a stepwise manner with a three-propionate intermediate. This chain is Coproheme decarboxylase, found in Bacillus mycoides (strain KBAB4) (Bacillus weihenstephanensis).